A 457-amino-acid chain; its full sequence is tRNA-2-methylthio-N(6)-dimethylallyladenosine synthase (457 aa).

The MTTase N-terminal domain maps to 3–120 (KKVYVKTFGC…LPQMIDARRA (118 aa)). The [4Fe-4S] cluster site is built by cysteine 12, cysteine 49, cysteine 83, cysteine 157, cysteine 161, and cysteine 164. In terms of domain architecture, Radical SAM core spans 143 to 377 (RVEGPSAFVS…QATIEENVAR (235 aa)). Residues 380–447 (QSMVGKVERI…PHSLRGELVL (68 aa)) enclose the TRAM domain.

Belongs to the methylthiotransferase family. MiaB subfamily. In terms of assembly, monomer. [4Fe-4S] cluster serves as cofactor.

It localises to the cytoplasm. It carries out the reaction N(6)-dimethylallyladenosine(37) in tRNA + (sulfur carrier)-SH + AH2 + 2 S-adenosyl-L-methionine = 2-methylsulfanyl-N(6)-dimethylallyladenosine(37) in tRNA + (sulfur carrier)-H + 5'-deoxyadenosine + L-methionine + A + S-adenosyl-L-homocysteine + 2 H(+). Functionally, catalyzes the methylthiolation of N6-(dimethylallyl)adenosine (i(6)A), leading to the formation of 2-methylthio-N6-(dimethylallyl)adenosine (ms(2)i(6)A) at position 37 in tRNAs that read codons beginning with uridine. This is tRNA-2-methylthio-N(6)-dimethylallyladenosine synthase from Burkholderia cenocepacia (strain HI2424).